The primary structure comprises 160 residues: Anaerobic nitrite reductase MHB1 (160 aa).

The 150-residue stretch at 8–157 (GFTEEQEALV…LVNAIKSEMK (150 aa)) folds into the Globin domain. Residues 41 to 45 (EIAPS) carry the Homodimerization motif. Heme b is bound by residues S51, K65, H69, K99, and H104. A Homodimerization motif is present at residues 111–123 (DEHFEVTKFALLE).

It belongs to the plant globin family. As to quaternary structure, homodimer. Heme b is required as a cofactor. In terms of tissue distribution, root specific.

The protein localises to the nucleus matrix. It localises to the cytoplasm. It catalyses the reaction Fe(III)-heme b-[protein] + nitric oxide + H2O = Fe(II)-heme b-[protein] + nitrite + 2 H(+). Phytoglobin that reduces nitrite to nitric oxide (NO) under anoxic conditions (e.g. during flooding or in waterlogged soil) and upon root nodulation. Required for general plant development and during nodulation, especially for the onset of symbiosis. Monitors nitric oxide (NO) levels during early phase of the nitrogen-fixing symbiosis and buffers oxygen in functioning nodules. May not function as an oxygen storage or transport protein. Has an unusually high affinity for O(2) through a hexacoordinate heme iron because of a very low dissociation constant. The sequence is that of Anaerobic nitrite reductase MHB1 from Medicago sativa (Alfalfa).